Consider the following 1040-residue polypeptide: Multidrug resistance protein MdtB (1040 aa).

Helical transmembrane passes span 16–36, 347–367, 369–389, 396–416, 440–460, 472–492, 537–557, 863–883, 888–908, 911–931, 968–988, and 998–1018; these read FIMR…AGII, LMMA…NIPA, IIPG…MVFL, LTLM…IVVI, IGFT…PLLF, FAIT…TLTP, WLTL…WVFI, LGST…VLGI, FIHP…ALLA, IAGS…IGIV, ILMT…STGV, and IGMV…TPVI.

It belongs to the resistance-nodulation-cell division (RND) (TC 2.A.6) family. MdtB subfamily. As to quaternary structure, part of a tripartite efflux system composed of MdtA, MdtB and MdtC. MdtB forms a heteromultimer with MdtC.

The protein resides in the cell inner membrane. Its function is as follows. The MdtABC tripartite complex confers resistance against novobiocin and deoxycholate. The sequence is that of Multidrug resistance protein MdtB from Escherichia coli (strain K12 / MC4100 / BW2952).